A 444-amino-acid chain; its full sequence is RING finger and transmembrane domain-containing protein 2 (444 aa).

The Extracellular portion of the chain corresponds to 1–181 (MWLFTVNQVL…ILLAKLCFQH (181 aa)). Disordered regions lie at residues 13–41 (MQRRHSSNTDNIPPERNRSQALSSEASVD) and 92–149 (PASR…PGTP). The segment covering 107 to 121 (YHHRQPHHHFHHGGH) has biased composition (basic residues). The segment covering 131–140 (GGDHRGHSEE) has biased composition (basic and acidic residues). A helical transmembrane segment spans residues 182–202 (KLGIAVCIGMASTFAYANSTL). The Cytoplasmic portion of the chain corresponds to 203 to 214 (REQVSLKEKRSV). A helical transmembrane segment spans residues 215-235 (LVILWILAFLAGNTLYVLYTF). Residues 236-255 (SSQQLYNSLIFLKPNLETLD) lie on the Extracellular side of the membrane. A helical transmembrane segment spans residues 256–276 (FFDLLWIVGIADFVLKYITIA). Topologically, residues 277-329 (LKCLIVALPKIILAVKSKGKFYLVIEELSQLFRSLVPIQLWYKYIMGDDSSNS) are cytoplasmic. Residues 330–350 (YFLGGVLIVLYSLCKSFDICG) traverse the membrane as a helical segment. The Extracellular segment spans residues 351-444 (RVGGVRKALK…GATSAHFQVY (94 aa)). The RING-type; degenerate zinc finger occupies 384 to 422 (CAICQAEFREPLILLCQHVFCEECLCLWLDRERTCPLSR).

Its subcellular location is the membrane. Functionally, E3 ubiquitin-protein ligase that negatively regulates IL3-dependent cellular responses through IL3RA ubiquitination and degradation by the proteasome, having an anti-inflammatory effect. The protein is RING finger and transmembrane domain-containing protein 2 (RNFT2) of Pongo abelii (Sumatran orangutan).